Consider the following 343-residue polypeptide: Serpentine receptor class alpha-11 (343 aa).

Residues 1–24 (MSSPDTPVCASPQQMEMYNSHFYT) are Extracellular-facing. Residues 25–45 (CALFFNLLIAFTSMTLIIMAI) form a helical membrane-spanning segment. Topologically, residues 46–60 (RKLLTESIINTSTRM) are cytoplasmic. A helical transmembrane segment spans residues 61–81 (FLIVGLLCCSLHQTAYIVLRV). Over 82 to 106 (QVIFQILFKLDQPCKLYYKAYDCKY) the chain is Extracellular. The chain crosses the membrane as a helical span at residues 107-127 (VTFSLVAGNTGMIFIQSAMTI). At 128–146 (DRILTTVFTNLWPKLKYWP) the chain is on the cytoplasmic side. The chain crosses the membrane as a helical span at residues 147–167 (GVILSSFMIGCNFTNVQFIFW). At 168–192 (NDPLTDYVPTCGQFPPKSVGRFQKF) the chain is on the extracellular side. Residues 193-213 (LEIALYMSLAHMVINVIILYI) traverse the membrane as a helical segment. Over 214–247 (NVVQDRRQRLVSTHDQSQSFDVNQRFQSRVALKS) the chain is Cytoplasmic. The chain crosses the membrane as a helical span at residues 248-268 (TQAIFFLSMSQFLSCFLYTIF). At 269–291 (TKLYLTLQPDMTPLQSGLTLALT) the chain is on the extracellular side. Residues 292-312 (YTTPYACIAIPSLIMVTLTFI) traverse the membrane as a helical segment. The Cytoplasmic portion of the chain corresponds to 313 to 343 (RNQRHRSINALRSQTETGDQYMQKIKKIWDK).

This sequence belongs to the nematode receptor-like protein sra family.

It localises to the membrane. A G protein-coupled receptor required for olfactory imprinting a requisite in ordorant response such as benzaldehyde and isoamylalcohol. The sequence is that of Serpentine receptor class alpha-11 from Caenorhabditis briggsae.